The primary structure comprises 587 residues: MAEYVNYVLGSLYVSDTATSTIPTDVRNFIAPPFPLNFWSGPTFTVRSNTRADPLKLVAARHRAAAAAIDTLEAQSQYGVANVDALIRPLERQVAKVADALAALEDAARAAESADAATPQVNASEADQRPDNIGQSLSEIQIAKNDVPMEFDTNLAVDLLATVFVSRAAGGSNGVVFGTWYRALQDRLVTERPVATRSIDYRDGRMSKTFMTTAVVSLQSCGRLYIGNRPYSAFEAAVLCLHLAHRAVNSNYTYPTSFSGLIEQLPVYIEAFSTALGDGTLGKVGYEFNGARLPKNQFHVPGGGGRYERGALNGHGVLETLIRLKVLPAIPGSLGTTSTAVGPELDADQTAYIDDVNKAAAAFLVRAQNLFLTEDQTLLRSTINTITALLLLRRLLWNGNVYTDRLRNNFQLGAIVPNLAVSQRDARGASGGDAAAMVSRSGNNNFTFLCERYVSPIYIANREVELTQLFPGLAALCLDAQTVARDQPQHRAVNVSTGRNQTNLTRLIGIELENRRRTAPVPINEVLAAHDAVALQYERGLGLLMQKPRLRASLEETRRLGQFNVASDYDLLYFVCLGYIPSLTSAM.

An interaction with major capsid protein/MCP region spans residues 1–53 (MAEYVNYVLGSLYVSDTATSTIPTDVRNFIAPPFPLNFWSGPTFTVRSNTRAD). Residues 113–132 (SADAATPQVNASEADQRPDN) are disordered.

The protein belongs to the herpesviridae CVC2 protein family. As to quaternary structure, heterodimerizes with CVC1. Interacts with major capsid protein/MCP and triplex capsid protein 1/TRX1 at the pentamer vertices. Interacts with the large tegument protein/LTP.

The protein resides in the virion. It is found in the host nucleus. Functionally, capsid vertex-specific component that plays a role during viral DNA encapsidation, assuring correct genome cleavage and presumably stabilizing capsids that contain full-length viral genomes. Participates in the interaction between the capsid and the tegument through interaction with the large tegument protein/LTP. This is Capsid vertex component 2 from Equine herpesvirus 1 (strain V592) (EHV-1).